The primary structure comprises 585 residues: Parathyroid hormone/parathyroid hormone-related peptide receptor (585 aa).

The signal sequence occupies residues 1-26; that stretch reads MGAPRISHSLALLLCCSVLSSVYALV. Residues 27–185 are Extracellular-facing; the sequence is DADDVITKEE…REREVFDRLG (159 aa). Intrachain disulfides connect Cys48/Cys114, Cys105/Cys145, and Cys128/Cys167. The segment at 69 to 90 is disordered; the sequence is MSRSAKTKKEKPAEKLYSQAEE. N-linked (GlcNAc...) asparagine glycosylation is found at Asn148, Asn158, Asn163, and Asn173. The helical transmembrane segment at 186–209 threads the bilayer; the sequence is MIYTVGYSISLGSLTVAVLILGYF. At 210-216 the chain is on the cytoplasmic side; sequence RRLHCTR. The helical transmembrane segment at 217–236 threads the bilayer; it reads NYIHMHLFVSFMLRAVSIFI. Residues 237 to 276 are Extracellular-facing; the sequence is KDAVLYSGVSTDEIERITEEELRAFTEPPPADKAGFVGCR. A helical membrane pass occupies residues 277–300; sequence VAVTVFLYFLTTNYYWILVEGLYL. Residues 301–314 are Cytoplasmic-facing; that stretch reads HSLIFMAFFSEKKY. Residues 315–336 form a helical membrane-spanning segment; sequence LWGFTLFGWGLPAVFVAVWVTV. Over 337–355 the chain is Extracellular; sequence RATLANTECWDLSSGNKKW. A helical transmembrane segment spans residues 356 to 376; sequence IIQVPILAAIVVNFILFINII. Residues 377–403 lie on the Cytoplasmic side of the membrane; sequence RVLATKLRETNAGRCDTRQQYRKLLKS. Residues 404–422 form a helical membrane-spanning segment; sequence TLVLMPLFGVHYIVFMATP. Over 423–434 the chain is Extracellular; that stretch reads YTEVSGILWQVQ. A helical transmembrane segment spans residues 435–457; the sequence is MHYEMLFNSFQGFFVAIIYCFCN. The Cytoplasmic segment spans residues 458–585; the sequence is GEVQAEIKKS…LLEEERETVM (128 aa). Residues 468–471 carry the Important for interaction with G proteins motif; the sequence is WSRW. The segment at 531-585 is disordered; it reads PGYVKHGSISENSLPSSGPEPGTKDDGYLNGSGLYEPMVGEQPPPLLEEERETVM.

This sequence belongs to the G-protein coupled receptor 2 family. As to quaternary structure, homodimer in the absence of bound ligand. Peptide hormone binding leads to dissociation of the homodimer. Post-translationally, N-glycosylated.

It is found in the cell membrane. Functionally, G-protein-coupled receptor for parathyroid hormone (PTH) and for parathyroid hormone-related peptide (PTHLH). Ligand binding causes a conformation change that triggers signaling via guanine nucleotide-binding proteins (G proteins) and modulates the activity of downstream effectors, such as adenylate cyclase (cAMP). PTH1R is coupled to G(s) G alpha proteins and mediates activation of adenylate cyclase activity. PTHLH dissociates from PTH1R more rapidly than PTH; as consequence, the cAMP response induced by PTHLH decays faster than the response induced by PTH. This chain is Parathyroid hormone/parathyroid hormone-related peptide receptor (PTH1R), found in Didelphis virginiana (North American opossum).